Here is a 297-residue protein sequence, read N- to C-terminus: N-acetylneuraminate lyase (297 aa).

2 residues coordinate aceneuramate: Ser-47 and Thr-48. Tyr-137 acts as the Proton donor in catalysis. The active-site Schiff-base intermediate with substrate is the Lys-165. Aceneuramate contacts are provided by Thr-167, Gly-189, Asp-191, Glu-192, and Ser-208.

The protein belongs to the DapA family. NanA subfamily. Homotetramer.

It is found in the cytoplasm. The enzyme catalyses aceneuramate = aldehydo-N-acetyl-D-mannosamine + pyruvate. Its pathway is amino-sugar metabolism; N-acetylneuraminate degradation; D-fructose 6-phosphate from N-acetylneuraminate: step 1/5. Its function is as follows. Catalyzes the reversible aldol cleavage of N-acetylneuraminic acid (sialic acid; Neu5Ac) to form pyruvate and N-acetylmannosamine (ManNAc) via a Schiff base intermediate. This Enterobacter sp. (strain 638) protein is N-acetylneuraminate lyase.